A 141-amino-acid chain; its full sequence is Small ribosomal subunit protein eS17w (141 aa).

The protein belongs to the eukaryotic ribosomal protein eS17 family.

In Arabidopsis thaliana (Mouse-ear cress), this protein is Small ribosomal subunit protein eS17w (RPS17D).